The sequence spans 220 residues: MNKAKLIDHTLLKPDSTKEQIDTIINEAKAYQFKSVCVNPTHVQYASEQLKGTDVLVCTVIGFPLGATTTAVKSYETKDAINNGAQEIDMVINIGALKDGRFDEVQNDIEAVVQAANGKTVKVIIETVLLTEKEKIKACQLSEAAGAHFVKTSTGFAGGGATVEDVKLMKDTVGDRLEVKASGGVRNLEDFNNMIEAGATRIGASAGVQIIQGLESNTDY.

Catalysis depends on Asp-89, which acts as the Proton donor/acceptor. Catalysis depends on Lys-151, which acts as the Schiff-base intermediate with acetaldehyde. Catalysis depends on Lys-180, which acts as the Proton donor/acceptor.

The protein belongs to the DeoC/FbaB aldolase family. DeoC type 1 subfamily.

It localises to the cytoplasm. The enzyme catalyses 2-deoxy-D-ribose 5-phosphate = D-glyceraldehyde 3-phosphate + acetaldehyde. It participates in carbohydrate degradation; 2-deoxy-D-ribose 1-phosphate degradation; D-glyceraldehyde 3-phosphate and acetaldehyde from 2-deoxy-alpha-D-ribose 1-phosphate: step 2/2. In terms of biological role, catalyzes a reversible aldol reaction between acetaldehyde and D-glyceraldehyde 3-phosphate to generate 2-deoxy-D-ribose 5-phosphate. The polypeptide is Deoxyribose-phosphate aldolase (Staphylococcus epidermidis (strain ATCC 12228 / FDA PCI 1200)).